The primary structure comprises 275 residues: Energy-coupling factor transporter ATP-binding protein EcfA1 (275 aa).

Residues 5–240 (IDVKNLSFRY…NDLDQIGLDD (236 aa)) enclose the ABC transporter domain. Position 40-47 (40-47 (GHNGSGKS)) interacts with ATP.

It belongs to the ABC transporter superfamily. Energy-coupling factor EcfA family. As to quaternary structure, forms a stable energy-coupling factor (ECF) transporter complex composed of 2 membrane-embedded substrate-binding proteins (S component), 2 ATP-binding proteins (A component) and 2 transmembrane proteins (T component).

The protein localises to the cell membrane. ATP-binding (A) component of a common energy-coupling factor (ECF) ABC-transporter complex. Unlike classic ABC transporters this ECF transporter provides the energy necessary to transport a number of different substrates. This Streptococcus pneumoniae serotype 4 (strain ATCC BAA-334 / TIGR4) protein is Energy-coupling factor transporter ATP-binding protein EcfA1.